We begin with the raw amino-acid sequence, 251 residues long: Intermembrane phospholipid transport system lipoprotein MlaA (251 aa).

The signal sequence occupies residues 1–17 (MKLRLSALALGTTLLVG). Cys-18 carries the N-palmitoyl cysteine lipid modification. A lipid anchor (S-diacylglycerol cysteine) is attached at Cys-18. Positions 228-251 (GELKPQENPNAQAIQDDLKDIDSE) are disordered.

The protein belongs to the MlaA family.

The protein localises to the cell outer membrane. In terms of biological role, involved in a phospholipid transport pathway that maintains lipid asymmetry in the outer membrane by retrograde trafficking of phospholipids from the outer membrane to the inner membrane. Required for intercellular spreading of S.flexneri. The chain is Intermembrane phospholipid transport system lipoprotein MlaA from Shigella flexneri.